Here is a 337-residue protein sequence, read N- to C-terminus: Protein XAP5 CIRCADIAN TIMEKEEPER (337 aa).

S2 carries the post-translational modification N-acetylserine. Coiled coils occupy residues 13–41 and 72–121; these read QDAV…KSAS and TREE…GSSR. Basic and acidic residues predominate over residues 23–37; the sequence is KQREAERKKIQELKS. The tract at residues 23-47 is disordered; the sequence is KQREAERKKIQELKSKSASGNDQSG. Residues 38-47 show a composition bias toward polar residues; that stretch reads KSASGNDQSG. Positions 125 to 174 are disordered; that stretch reads AEDFENGSDEDDGENKSSGTGNLRCGKLGKDPSVETNFLPDSEREAEEQA. Acidic residues predominate over residues 126–137; that stretch reads EDFENGSDEDDG. A Phosphoserine modification is found at S132. Basic and acidic residues predominate over residues 165–174; the sequence is DSEREAEEQA.

Belongs to the FAM50 family. Expressed in leaves stems, flowers, roots, trichomes and hypocotyls.

The protein resides in the nucleus. Its function is as follows. Involved in light regulation of the circadian clock and photomorphogenesis. May play a global role in coordinating growth in response to the light environment. Acts as a light quality sensor directing both negative and positive transcriptional regulation. Inhibits growth in red light but promote growth in blue light. Inhibits clock gene expression in diurnal cycles. Plays no role in the control of flowering time. The protein is Protein XAP5 CIRCADIAN TIMEKEEPER (XCT) of Arabidopsis thaliana (Mouse-ear cress).